Here is a 917-residue protein sequence, read N- to C-terminus: Autophagy-related protein 9 (917 aa).

Residues 1-226 (MASNIFSRLV…AGFWCIIVQR (226 aa)) are Cytoplasmic-facing. Disordered regions lie at residues 16–37 (RSFY…RAGI) and 119–177 (LLLS…QGRP). The chain crosses the membrane as a helical span at residues 227–247 (ILELVNAAFVAVFLTFLSQCV). Topologically, residues 248-275 (DYHKLPHSKKMEDIIIPKCTQNMSLVWN) are lumenal. Residue asparagine 269 is glycosylated (N-linked (GlcNAc...) asparagine). A helical membrane pass occupies residues 276 to 296 (VGLWLFAIYFICRCFGLIIQL). Residues 297–442 (RQLKHLRDFY…RQLSQKLKSR (146 aa)) lie on the Cytoplasmic side of the membrane. Residues 443 to 463 (FFFAGLMIFVMSPFIALYLIL) lie within the membrane without spanning it. At 464 to 539 (VYFLTYFHEF…ARTVSFITGS (76 aa)) the chain is on the cytoplasmic side. Residues 540–560 (IVAVLGLATIFDSEAFLTFEI) form a helical membrane-spanning segment. At 561-564 (TPDR) the chain is on the lumenal side. A helical membrane pass occupies residues 565–585 (SVLFYVSILATLWAVARGNIS). Residues 586–633 (DDNEVYDPEFAMKSIIEFTHYEPDHWRGRLHSTEVKNEFSELYKPRPQ) lie on the Cytoplasmic side of the membrane. Residue lysine 621 is modified to N6-acetyllysine. The stretch at 634–654 (IFLEEILSILLTPLVLLVSLP) is an intramembrane region. Residues 655–917 (NSTDQIVDFF…FQQAHMHLRR (263 aa)) are Cytoplasmic-facing. Positions 854 to 895 (DARFGKLGDEDIDESGGALDESTWQTSPTKTLSRENSGANPQ) are disordered. Residues 875 to 895 (STWQTSPTKTLSRENSGANPQ) are compositionally biased toward polar residues.

It belongs to the ATG9 family. As to quaternary structure, homotrimer; forms a homotrimer with a central pore that forms a path between the two membrane leaflets. Interacts with HAT1. Post-translationally, acetylated by HAT1 at Lys-621, which increases the ability to bind vesicles during nutrient starvation induction. In terms of processing, phosphorylated by ATG1. ATG1 phosphorylation is required for preautophagosome elongation.

The protein localises to the preautophagosomal structure membrane. The protein resides in the cytoplasmic vesicle membrane. Its subcellular location is the vacuole membrane. It localises to the golgi apparatus membrane. It is found in the endoplasmic reticulum membrane. The enzyme catalyses a 1,2-diacyl-sn-glycero-3-phosphocholine(in) = a 1,2-diacyl-sn-glycero-3-phosphocholine(out). It carries out the reaction a 1,2-diacyl-sn-glycero-3-phospho-L-serine(in) = a 1,2-diacyl-sn-glycero-3-phospho-L-serine(out). It catalyses the reaction a 1,2-diacyl-sn-glycero-3-phosphoethanolamine(in) = a 1,2-diacyl-sn-glycero-3-phosphoethanolamine(out). The catalysed reaction is a 1,2-diacyl-sn-glycero-3-phospho-(1D-myo-inositol-3-phosphate)(in) = a 1,2-diacyl-sn-glycero-3-phospho-(1D-myo-inositol-3-phosphate)(out). Functionally, phospholipid scramblase involved in autophagy and cytoplasm to vacuole transport (Cvt) vesicle formation. Cycles between the preautophagosomal structure/phagophore assembly site (PAS) and the cytoplasmic vesicle pool and supplies membrane for the growing autophagosome. Lipid scramblase activity plays a key role in preautophagosomal structure/phagophore assembly by distributing the phospholipids that arrive through ATG2 from the cytoplasmic to the luminal leaflet of the bilayer, thereby driving autophagosomal membrane expansion. Required for mitophagy. Also involved in endoplasmic reticulum-specific autophagic process and is essential for the survival of cells subjected to severe ER stress. Different machineries are required for anterograde trafficking to the PAS during either the Cvt pathway or bulk autophagy and for retrograde trafficking. Plays a role in appressorium formation and pathogenicity. This chain is Autophagy-related protein 9, found in Pyricularia oryzae (strain 70-15 / ATCC MYA-4617 / FGSC 8958) (Rice blast fungus).